Here is an 809-residue protein sequence, read N- to C-terminus: G-type lectin S-receptor-like serine/threonine-protein kinase At1g61480 (809 aa).

The N-terminal stretch at 1–24 is a signal peptide; sequence MGKKRIMFFASLLLITIFLSFSYA. A Bulb-type lectin domain is found at 25 to 144; that stretch reads GITRESPLSI…NSGRTLWESF (120 aa). At 25-425 the chain is on the extracellular side; that stretch reads GITRESPLSI…SELGGNKRNK (401 aa). Residues Asn-53, Asn-88, Asn-94, Asn-103, Asn-117, Asn-134, and Asn-236 are each glycosylated (N-linked (GlcNAc...) asparagine). Residues 278 to 314 form the EGF-like domain; the sequence is PENSCDIYGFCGPFGICVMSVPPKCKCFKGFVPKSIE. Intrachain disulfides connect Cys-282–Cys-294 and Cys-288–Cys-302. Residues Asn-320 and Asn-375 are each glycosylated (N-linked (GlcNAc...) asparagine). The PAN domain maps to 333–415; that stretch reads CQGNTNGKTV…GEILSIRLAS (83 aa). Intrachain disulfides connect Cys-368-Cys-389 and Cys-372-Cys-378. A helical transmembrane segment spans residues 426 to 446; sequence IIVASIVSLSLFVILAFAAFC. Topologically, residues 447–809 are cytoplasmic; that stretch reads FLRYKVKHTV…EMTQSVILGR (363 aa). The Protein kinase domain occupies 496–781; it reads FSLSNKLGQG…DLTSPKQPTF (286 aa). ATP is bound by residues 502–510 and Lys-524; that span reads LGQGGFGSV. Phosphoserine is present on residues Ser-530 and Ser-545. Residues 585–602 are caM-binding; sequence RKRLEIDWPKRFNIIEGI. The active-site Proton acceptor is the Asp-621. Residues Ser-625 and Ser-638 each carry the phosphoserine modification. Thr-655 carries the post-translational modification Phosphothreonine. Ser-698 and Ser-792 each carry phosphoserine.

Belongs to the protein kinase superfamily. Ser/Thr protein kinase family.

The protein localises to the cell membrane. It catalyses the reaction L-seryl-[protein] + ATP = O-phospho-L-seryl-[protein] + ADP + H(+). It carries out the reaction L-threonyl-[protein] + ATP = O-phospho-L-threonyl-[protein] + ADP + H(+). The chain is G-type lectin S-receptor-like serine/threonine-protein kinase At1g61480 from Arabidopsis thaliana (Mouse-ear cress).